The primary structure comprises 86 residues: Large ribosomal subunit protein bL31 (86 aa).

A disordered region spans residues 65-86; that stretch reads YRMASSDSSEQKDKSSEEKKES. Positions 73-86 are enriched in basic and acidic residues; the sequence is SEQKDKSSEEKKES.

This sequence belongs to the bacterial ribosomal protein bL31 family. Type A subfamily. Part of the 50S ribosomal subunit.

Functionally, binds the 23S rRNA. This is Large ribosomal subunit protein bL31 from Prochlorococcus marinus (strain NATL1A).